We begin with the raw amino-acid sequence, 479 residues long: UDP-N-acetylmuramate--L-alanine ligase (479 aa).

An ATP-binding site is contributed by Gly-114–Thr-120.

Belongs to the MurCDEF family.

Its subcellular location is the cytoplasm. It carries out the reaction UDP-N-acetyl-alpha-D-muramate + L-alanine + ATP = UDP-N-acetyl-alpha-D-muramoyl-L-alanine + ADP + phosphate + H(+). It functions in the pathway cell wall biogenesis; peptidoglycan biosynthesis. Cell wall formation. In Pelodictyon phaeoclathratiforme (strain DSM 5477 / BU-1), this protein is UDP-N-acetylmuramate--L-alanine ligase.